We begin with the raw amino-acid sequence, 65 residues long: Alpha-conotoxine-like Am1.5 (65 aa).

Residues 1 to 21 (MGMRMMFTVFLLVVLATTVVS) form the signal peptide. The propeptide occupies 22–46 (FMSGRAFRDRNAAAKVSDLIALKAR). Glu-49 bears the 4-carboxyglutamate mark. The segment at 52–54 (SHP) is ser-Xaa-Pro motif, crucial for potent interaction with nAChR. 4-hydroxyproline is present on residues Pro-54 and Pro-61. Glu-62 is modified (4-carboxyglutamate).

The protein belongs to the conotoxin A superfamily. Contains 2 disulfide bonds. Expressed by the venom duct.

The protein localises to the secreted. Its function is as follows. Alpha-conotoxins act on postsynaptic membranes, they bind to the nicotinic acetylcholine receptors (nAChR) and thus inhibit them. In Conus amadis (Amadis cone), this protein is Alpha-conotoxine-like Am1.5.